The following is a 304-amino-acid chain: tRNA-uridine aminocarboxypropyltransferase 1 (304 aa).

Ser2 is subject to N-acetylserine. The DXTW signature appears at 206–209 (DSTW).

This sequence belongs to the TDD superfamily. DTWD1 family.

The protein localises to the nucleus. It catalyses the reaction a uridine in tRNA + S-adenosyl-L-methionine = a 3-[(3S)-3-amino-3-carboxypropyl]uridine in tRNA + S-methyl-5'-thioadenosine + H(+). Functionally, catalyzes the formation of 3-(3-amino-3-carboxypropyl)uridine (acp3U) at position 20 in the D-loop of several cytoplasmic tRNAs (acp3U(20)). This Pongo abelii (Sumatran orangutan) protein is tRNA-uridine aminocarboxypropyltransferase 1.